We begin with the raw amino-acid sequence, 268 residues long: MLQYPHINPVALQLGPIKIHWYGLMYLLGIFAGWYLTRYRAKVKPWAPIKPEQVGDLTFYVALGVILGGRIGYIIFYNLPYYFHNPSQMFFLWDGGMSFHGGFIGVLIAFALFARKIGANFFDLGEFVAPVIPIGLGAGRIGNFINGELLGKVTDSPLGMVFPTGGPLPRYPSQLFEFFFEGVVLFSVLWLVTIKKRPRYLVLGLFMFLYGYARFICEFFRQPDPQYGYIFFNWMTMGQILSIPMILLGAVILIAVFIKTRKNKCENI.

The next 4 membrane-spanning stretches (helical) occupy residues 14–34 (LGPIKIHWYGLMYLLGIFAGW), 57–77 (LTFYVALGVILGGRIGYIIFY), 90–110 (FFLWDGGMSFHGGFIGVLIAF), and 117–137 (IGANFFDLGEFVAPVIPIGLG). Arginine 140 contacts a 1,2-diacyl-sn-glycero-3-phospho-(1'-sn-glycerol). 3 helical membrane passes run 174–194 (QLFEFFFEGVVLFSVLWLVTI), 200–220 (YLVLGLFMFLYGYARFICEFF), and 238–258 (GQILSIPMILLGAVILIAVFI).

The protein belongs to the Lgt family.

The protein resides in the cell inner membrane. It catalyses the reaction L-cysteinyl-[prolipoprotein] + a 1,2-diacyl-sn-glycero-3-phospho-(1'-sn-glycerol) = an S-1,2-diacyl-sn-glyceryl-L-cysteinyl-[prolipoprotein] + sn-glycerol 1-phosphate + H(+). It functions in the pathway protein modification; lipoprotein biosynthesis (diacylglyceryl transfer). Catalyzes the transfer of the diacylglyceryl group from phosphatidylglycerol to the sulfhydryl group of the N-terminal cysteine of a prolipoprotein, the first step in the formation of mature lipoproteins. This chain is Phosphatidylglycerol--prolipoprotein diacylglyceryl transferase, found in Francisella tularensis subsp. holarctica (strain FTNF002-00 / FTA).